A 444-amino-acid chain; its full sequence is Ribulose bisphosphate carboxylase large chain (444 aa).

At Lys7 the chain carries N6,N6,N6-trimethyllysine. Residues Asn116 and Thr166 each contribute to the substrate site. Lys168 serves as the catalytic Proton acceptor. Position 170 (Lys170) interacts with substrate. The Mg(2+) site is built by Lys194, Asp196, and Glu197. Position 194 is an N6-carboxylysine (Lys194). His287 serves as the catalytic Proton acceptor. Positions 288, 320, and 372 each coordinate substrate.

It belongs to the RuBisCO large chain family. Type I subfamily. In terms of assembly, heterohexadecamer of 8 large chains and 8 small chains; disulfide-linked. The disulfide link is formed within the large subunit homodimers. Mg(2+) serves as cofactor. In terms of processing, the disulfide bond which can form in the large chain dimeric partners within the hexadecamer appears to be associated with oxidative stress and protein turnover.

It is found in the plastid. The protein resides in the chloroplast. It catalyses the reaction 2 (2R)-3-phosphoglycerate + 2 H(+) = D-ribulose 1,5-bisphosphate + CO2 + H2O. The enzyme catalyses D-ribulose 1,5-bisphosphate + O2 = 2-phosphoglycolate + (2R)-3-phosphoglycerate + 2 H(+). Functionally, ruBisCO catalyzes two reactions: the carboxylation of D-ribulose 1,5-bisphosphate, the primary event in carbon dioxide fixation, as well as the oxidative fragmentation of the pentose substrate in the photorespiration process. Both reactions occur simultaneously and in competition at the same active site. The sequence is that of Ribulose bisphosphate carboxylase large chain from Watsonia angusta.